Here is a 179-residue protein sequence, read N- to C-terminus: Large ribosomal subunit protein uL5 (179 aa).

At K3 the chain carries N6-acetyllysine.

This sequence belongs to the universal ribosomal protein uL5 family. In terms of assembly, part of the 50S ribosomal subunit; part of the 5S rRNA/L5/L18/L25 subcomplex. Contacts the 5S rRNA and the P site tRNA. Forms a bridge to the 30S subunit in the 70S ribosome.

Its function is as follows. This is one of the proteins that bind and probably mediate the attachment of the 5S RNA into the large ribosomal subunit, where it forms part of the central protuberance. In the 70S ribosome it contacts protein S13 of the 30S subunit (bridge B1b), connecting the 2 subunits; this bridge is implicated in subunit movement. Contacts the P site tRNA; the 5S rRNA and some of its associated proteins might help stabilize positioning of ribosome-bound tRNAs. The polypeptide is Large ribosomal subunit protein uL5 (Escherichia coli O45:K1 (strain S88 / ExPEC)).